The sequence spans 237 residues: Thrombin-like enzyme agkihpin-2 (237 aa).

Residue methionine 1 is a propeptide. Residues 2–228 (ILGDDECNIN…HLDWIENIIA (227 aa)) enclose the Peptidase S1 domain. Cysteine 27 and cysteine 43 are oxidised to a cystine. Catalysis depends on histidine 42, which acts as the Charge relay system. Asparagine 80 is a glycosylation site (N-linked (GlcNAc...) asparagine). Aspartate 87 acts as the Charge relay system in catalysis. Disulfide bonds link cysteine 119-cysteine 189, cysteine 151-cysteine 168, and cysteine 179-cysteine 204. Serine 183 acts as the Charge relay system in catalysis.

This sequence belongs to the peptidase S1 family. Snake venom subfamily. As to expression, expressed by the venom gland (at protein level). Expressed by the venom gland.

The protein localises to the secreted. The hydrolysis of TAMe (tosyl-arginine methyl ester) substrate is activated by Ca(2+), Fe(3+), Mg(2+) and Zn(2+), and inhibited by EDTA, PMSF and DTT. Its function is as follows. Thrombin-like enzyme that shows fibrinogenolytic activity against bovine fibrinogen alpha and beta chains, but not gamma chain. Hydrolyzes fibrin. Enhances ADP-induced human platelet aggregation. Has arginine esterase activity for TAMe (tosyl-arginine methyl ester) substrate. Reduces thrombin-induced thrombosis. Does not have hemorrhagic activity. Reduces the motility of human liver cancer HepG2 cells in a wound-healing assay. This chain is Thrombin-like enzyme agkihpin-2, found in Gloydius halys (Chinese water mocassin).